The sequence spans 372 residues: tRNA-specific 2-thiouridylase MnmA (372 aa).

Residues 16–23 (GMSGGVDS) and Met-42 each bind ATP. An interaction with target base in tRNA region spans residues 102-104 (NPD). Residue Cys-107 is the Nucleophile of the active site. A disulfide bridge links Cys-107 with Cys-205. Gly-132 is a binding site for ATP. Residues 155 to 157 (KDQ) are interaction with tRNA. Catalysis depends on Cys-205, which acts as the Cysteine persulfide intermediate. The interval 317-318 (RY) is interaction with tRNA.

This sequence belongs to the MnmA/TRMU family.

The protein localises to the cytoplasm. The catalysed reaction is S-sulfanyl-L-cysteinyl-[protein] + uridine(34) in tRNA + AH2 + ATP = 2-thiouridine(34) in tRNA + L-cysteinyl-[protein] + A + AMP + diphosphate + H(+). Its function is as follows. Catalyzes the 2-thiolation of uridine at the wobble position (U34) of tRNA, leading to the formation of s(2)U34. This is tRNA-specific 2-thiouridylase MnmA from Shewanella oneidensis (strain ATCC 700550 / JCM 31522 / CIP 106686 / LMG 19005 / NCIMB 14063 / MR-1).